A 451-amino-acid polypeptide reads, in one-letter code: MKLPGGTIICARNASSYYDTVIVGGGMVGNAMACSLGANKSFQSKSVLLLDAGRSPSLASFKPGAPFNNRVVATSPTSIDTFKKLGVWDQINSHRTKKVNRLFVFDSCSTSEIEFERGQQEEVAFIIENDLIVGSLYEKLAEYKNVDVKTGAKVEDCSIPNALENMATIKLENGDVIETSLLIGADGVNSKVRHASNLDYTTFNYNQHGLVAIVNIETANGKNETAWQRFTTLGPVALLPLSDTVSGLTWSTSPEEAQRLKQLPSDQFVDELNSALFSQNNQIPLVNQTIFALNRMNPFRTETFGRKAEGTTPPHVITVQDKSRASFPLGFGNAHSYITTRCALIGDAAHRMHPLAGQGVNLGWSDVQILDKVLGDAVREGADIGSITYLREYDSAAQKHNLPVMVSVDLLNRLYRTDAPAIVAARAFGLNAFNSLGPVKNFLMNYLSAHR.

Belongs to the UbiH/COQ6 family. In terms of assembly, component of a multi-subunit COQ enzyme complex. FAD serves as cofactor.

The protein localises to the mitochondrion inner membrane. It carries out the reaction a 4-hydroxy-3-(all-trans-polyprenyl)benzoate + 2 reduced [2Fe-2S]-[ferredoxin] + O2 + 2 H(+) = a 3,4-dihydroxy-5-(all-trans-polyprenyl)benzoate + 2 oxidized [2Fe-2S]-[ferredoxin] + H2O. It catalyses the reaction a 2-methoxy-6-(all-trans-polyprenyl)phenol + 2 reduced [2Fe-2S]-[ferredoxin] + O2 + 2 H(+) = a 2-methoxy-6-(all-trans-polyprenyl)benzene-1,4-diol + 2 oxidized [2Fe-2S]-[ferredoxin] + H2O. It functions in the pathway cofactor biosynthesis; ubiquinone biosynthesis. Functionally, FAD-dependent monooxygenase required for two non-consecutive steps during ubiquinone biosynthesis. Required for the C5-ring hydroxylation during ubiquinone biosynthesis by catalyzing the hydroxylation of 4-hydroxy-3-(all-trans-polyprenyl)benzoic acid to 3,4-dihydroxy-5-(all-trans-polyprenyl)benzoic acid. Also acts downstream of coq4, for the C1-hydroxylation during ubiquinone biosynthesis by catalyzing the hydroxylation of 2-methoxy-6-(all-trans-polyprenyl)phenol to 2-methoxy-6-(all-trans-polyprenyl)benzene-1,4-diol. The electrons required for the hydroxylation reaction are funneled indirectly to coq-6 from NADPH via a ferredoxin/ferredoxin reductase system. The polypeptide is Ubiquinone biosynthesis monooxygenase COQ6, mitochondrial (Caenorhabditis elegans).